We begin with the raw amino-acid sequence, 138 residues long: Cysteine desulfuration protein SufE (138 aa).

C51 acts as the Cysteine persulfide intermediate in catalysis.

Belongs to the SufE family. In terms of assembly, homodimer. Interacts with SufS.

The protein localises to the cytoplasm. It participates in cofactor biosynthesis; iron-sulfur cluster biosynthesis. Participates in cysteine desulfuration mediated by SufS. Cysteine desulfuration mobilizes sulfur from L-cysteine to yield L-alanine and constitutes an essential step in sulfur metabolism for biosynthesis of a variety of sulfur-containing biomolecules. Functions as a sulfur acceptor for SufS, by mediating the direct transfer of the sulfur atom from the S-sulfanylcysteine of SufS, an intermediate product of cysteine desulfuration process. The polypeptide is Cysteine desulfuration protein SufE (Salmonella choleraesuis (strain SC-B67)).